Here is an 89-residue protein sequence, read N- to C-terminus: Small ribosomal subunit protein bS20 (89 aa).

Over residues 1–11 the composition is skewed to basic and acidic residues; it reads MANHKSAEKRN. A disordered region spans residues 1–30; it reads MANHKSAEKRNRQNQVARLRNKSTRTAMKN.

This sequence belongs to the bacterial ribosomal protein bS20 family.

In terms of biological role, binds directly to 16S ribosomal RNA. The polypeptide is Small ribosomal subunit protein bS20 (Desulfotalea psychrophila (strain LSv54 / DSM 12343)).